Consider the following 378-residue polypeptide: Chaperone protein DnaJ 1 (378 aa).

Positions 4–68 constitute a J domain; that stretch reads DYYGILGVDR…DKRRIVDMGG (65 aa). A CR-type zinc finger spans residues 129–211; that stretch reads GVKKDLTLDT…CAGDGRVRAR (83 aa). Residues Cys142, Cys145, Cys159, Cys162, Cys185, Cys188, Cys199, and Cys202 each contribute to the Zn(2+) site. CXXCXGXG motif repeat units lie at residues 142-149, 159-166, 185-192, and 199-206; these read CSKCHGSG, CGTCHGSG, CHTCNGTG, and CDECAGDG.

Belongs to the DnaJ family. As to quaternary structure, homodimer. The cofactor is Zn(2+).

It is found in the cytoplasm. Participates actively in the response to hyperosmotic and heat shock by preventing the aggregation of stress-denatured proteins and by disaggregating proteins, also in an autonomous, DnaK-independent fashion. Unfolded proteins bind initially to DnaJ; upon interaction with the DnaJ-bound protein, DnaK hydrolyzes its bound ATP, resulting in the formation of a stable complex. GrpE releases ADP from DnaK; ATP binding to DnaK triggers the release of the substrate protein, thus completing the reaction cycle. Several rounds of ATP-dependent interactions between DnaJ, DnaK and GrpE are required for fully efficient folding. Also involved, together with DnaK and GrpE, in the DNA replication of plasmids through activation of initiation proteins. This Corynebacterium efficiens (strain DSM 44549 / YS-314 / AJ 12310 / JCM 11189 / NBRC 100395) protein is Chaperone protein DnaJ 1.